The chain runs to 331 residues: MRCSQREVFVKREEPTNPEWGKPPSQRTADEYIRHSFVILDKPRGPSSHEVAAWVKKILGVERAGHAGTLDPKVSGVLPIAVAEGTKVLMALSRSDKVYVAVAKFHGDVDEERLRAVLREFQGEIYQKPPLRSAVKRQLRTRRVFSLELLELEGRYAVIKMHVEAGTYARKIIHDIGEVLGVGANMRELRRVAVTCFTEDEAVTLQDVADAYYIWKKYGDDTYLRSVLLPIEEIARHLPKIWVRDSAVDAVCHGAPLAAPGISKFEVPFSKGDIVAMFTLKGELVGIGRALVDSEEVKKMERGAVVRTDRVVMRRGTYPAMWKKGQRAAKT.

Basic and acidic residues predominate over residues 1–15; sequence MRCSQREVFVKREEP. The tract at residues 1–27 is disordered; that stretch reads MRCSQREVFVKREEPTNPEWGKPPSQR. Asp71 acts as the Nucleophile in catalysis. Residues 238–313 form the PUA domain; the sequence is LPKIWVRDSA…AVVRTDRVVM (76 aa).

This sequence belongs to the pseudouridine synthase TruB family. Type 2 subfamily.

The catalysed reaction is uridine(55) in tRNA = pseudouridine(55) in tRNA. Its function is as follows. Could be responsible for synthesis of pseudouridine from uracil-55 in the psi GC loop of transfer RNAs. The polypeptide is Probable tRNA pseudouridine synthase B (Pyrobaculum arsenaticum (strain DSM 13514 / JCM 11321 / PZ6)).